The following is a 396-amino-acid chain: Putative amidohydrolase YhaA (396 aa).

Asp-85 is an active-site residue. The active-site Proton acceptor is the Glu-143. 3 residues coordinate Zn(2+): Glu-144, Arg-182, and His-368.

Belongs to the peptidase M20A family. It depends on Zn(2+) as a cofactor. Co(2+) serves as cofactor.

This chain is Putative amidohydrolase YhaA (yhaA), found in Bacillus subtilis (strain 168).